Reading from the N-terminus, the 287-residue chain is Small ribosomal subunit protein uS10m (287 aa).

A mitochondrion-targeting transit peptide spans 1–33 (MSLFSPHRILLRTGSAFQLATATRALLSTSSQL). Positions 33-43 (LRNTKNAQSGL) are enriched in polar residues. The segment at 33-84 (LRNTKNAQSGLAEQARAEEPVASSPSQTTRPEQKSLEEETTKQTQTHADSTV) is disordered. A compositionally biased stretch (basic and acidic residues) spans 63 to 73 (PEQKSLEEETT). A compositionally biased stretch (polar residues) spans 74 to 84 (KQTQTHADSTV).

The protein belongs to the universal ribosomal protein uS10 family. Part of the mitochondrial small ribosomal subunit.

Its subcellular location is the mitochondrion. Functionally, involved in mitochondrial genome encoded proteins translation. Involved in the binding of tRNA to the ribosomes. The chain is Small ribosomal subunit protein uS10m (rsm10) from Emericella nidulans (strain FGSC A4 / ATCC 38163 / CBS 112.46 / NRRL 194 / M139) (Aspergillus nidulans).